Here is a 345-residue protein sequence, read N- to C-terminus: Phosphoribosylformylglycinamidine cyclo-ligase (345 aa).

This sequence belongs to the AIR synthase family.

Its subcellular location is the cytoplasm. The enzyme catalyses 2-formamido-N(1)-(5-O-phospho-beta-D-ribosyl)acetamidine + ATP = 5-amino-1-(5-phospho-beta-D-ribosyl)imidazole + ADP + phosphate + H(+). The protein operates within purine metabolism; IMP biosynthesis via de novo pathway; 5-amino-1-(5-phospho-D-ribosyl)imidazole from N(2)-formyl-N(1)-(5-phospho-D-ribosyl)glycinamide: step 2/2. The polypeptide is Phosphoribosylformylglycinamidine cyclo-ligase (Escherichia coli O139:H28 (strain E24377A / ETEC)).